Here is a 426-residue protein sequence, read N- to C-terminus: 3-phosphoshikimate 1-carboxyvinyltransferase (426 aa).

3-phosphoshikimate contacts are provided by Lys-21, Ser-22, and Arg-26. Position 21 (Lys-21) interacts with phosphoenolpyruvate. Residues Gly-93 and Arg-121 each coordinate phosphoenolpyruvate. Residues Ser-165, Gln-167, Asp-313, and Lys-340 each contribute to the 3-phosphoshikimate site. Residue Gln-167 participates in phosphoenolpyruvate binding. Residue Asp-313 is the Proton acceptor of the active site. Residues Arg-344 and Arg-386 each contribute to the phosphoenolpyruvate site.

The protein belongs to the EPSP synthase family. As to quaternary structure, monomer.

It is found in the cytoplasm. The enzyme catalyses 3-phosphoshikimate + phosphoenolpyruvate = 5-O-(1-carboxyvinyl)-3-phosphoshikimate + phosphate. It participates in metabolic intermediate biosynthesis; chorismate biosynthesis; chorismate from D-erythrose 4-phosphate and phosphoenolpyruvate: step 6/7. Its function is as follows. Catalyzes the transfer of the enolpyruvyl moiety of phosphoenolpyruvate (PEP) to the 5-hydroxyl of shikimate-3-phosphate (S3P) to produce enolpyruvyl shikimate-3-phosphate and inorganic phosphate. The protein is 3-phosphoshikimate 1-carboxyvinyltransferase of Solibacter usitatus (strain Ellin6076).